Here is a 262-residue protein sequence, read N- to C-terminus: Transcription factor Spi-B (262 aa).

The TAD1 (Acidic) stretch occupies residues 1 to 31 (MLALEAAQLDGPHFSCLYPDGVFYDLDSCKH). Positions 41–61 (PDSLWDWTVAPPVPATPYEAF) are TAD2. The tract at residues 140-163 (ALEVSDSESDEALVAGPEGKGSEA) is disordered. Positions 169 to 252 (LRLYQFLLGL…VKRKLTYQFD (84 aa)) form a DNA-binding region, ETS.

Belongs to the ETS family. As to quaternary structure, can form homotypic interactions. Interacts with IRF4/Pip. Interacts with JUN. Interacts with TBP. May also interact with CREBBP and EP300. Interacts with NONO/p54(nrb). In terms of tissue distribution, expressed in plasmacytoid dendritic cells (pDCs) and B-cells, not expressed in T-cells or granulocytes. May also be enriched in stem cell populations of the liver.

The protein localises to the nucleus. It is found in the cytoplasm. Its function is as follows. Sequence specific transcriptional activator which binds to the PU-box, a purine-rich DNA sequence (5'-GAGGAA-3') that can act as a lymphoid-specific enhancer. Promotes development of plasmacytoid dendritic cells (pDCs), also known as type 2 DC precursors (pre-DC2) or natural interferon (IFN)-producing cells. These cells have the capacity to produce large amounts of interferon and block viral replication. May be required for B-cell receptor (BCR) signaling, which is necessary for normal B-cell development and antigenic stimulation. This is Transcription factor Spi-B (SPIB) from Homo sapiens (Human).